The primary structure comprises 839 residues: DNA (cytosine-5)-methyltransferase CMT3 (839 aa).

Disordered regions lie at residues 1 to 38 (MAPK…EPVT) and 51 to 86 (LDEP…KTKD). Residues 19–30 (PKPKKRAPKRAK) are compositionally biased toward basic residues. The segment covering 51–70 (LDEPIPESEAKSTWPDRYKP) has biased composition (basic and acidic residues). Residues 108–227 (QIYELNDDAY…LPYDTFEAIQ (120 aa)) form the BAH domain. Residues 269–813 (ATLLDLYSGC…YALGTAFQGL (545 aa)) enclose the SAM-dependent MTase C5-type domain. The Chromo domain maps to 382 to 447 (FTVDKIVGIS…LGYKSGILPL (66 aa)). Cysteine 460 is an active-site residue.

It belongs to the class I-like SAM-binding methyltransferase superfamily. C5-methyltransferase family. In terms of assembly, homodimer. Interacts with HP1 and, through its chromodomain, with the N-terminal tail of histone H3 doubly methylated at 'Lys-9' and 'Lys-27'. Binds to JMJ24. Ubiquitinated by JMJ24, subsequently beingargeted to proteasomal degradation thus initiating the destabilization of the heterochromatic state of endogenous silenced loci.

It is found in the nucleus. It carries out the reaction a 2'-deoxycytidine in DNA + S-adenosyl-L-methionine = a 5-methyl-2'-deoxycytidine in DNA + S-adenosyl-L-homocysteine + H(+). Its function is as follows. Involved in the CpXpG methylation (e.g. CHG cytosine) and in gene silencing. Methylates preferentially transposon-related sequences. Functionally redundant to DRM1/DRM2 to maintain non-CpG methylation. Involved in RNA-directed DNA methylation. The sequence is that of DNA (cytosine-5)-methyltransferase CMT3 from Arabidopsis thaliana (Mouse-ear cress).